Reading from the N-terminus, the 121-residue chain is Large ribosomal subunit protein bL12 (121 aa).

This sequence belongs to the bacterial ribosomal protein bL12 family. In terms of assembly, homodimer. Part of the ribosomal stalk of the 50S ribosomal subunit. Forms a multimeric L10(L12)X complex, where L10 forms an elongated spine to which 2 to 4 L12 dimers bind in a sequential fashion. Binds GTP-bound translation factors.

Its function is as follows. Forms part of the ribosomal stalk which helps the ribosome interact with GTP-bound translation factors. Is thus essential for accurate translation. This chain is Large ribosomal subunit protein bL12, found in Enterobacter sp. (strain 638).